The chain runs to 231 residues: Small ribosomal subunit protein uS5 (231 aa).

One can recognise an S5 DRBM domain in the interval 61–124; that stretch reads KFRSKKPYRM…NRAKLNIIKV (64 aa).

The protein belongs to the universal ribosomal protein uS5 family. As to quaternary structure, part of the 30S ribosomal subunit. Contacts protein S4.

In terms of biological role, with S4 and S12 plays an important role in translational accuracy. This is Small ribosomal subunit protein uS5 from Nanoarchaeum equitans (strain Kin4-M).